A 569-amino-acid polypeptide reads, in one-letter code: Putative tail sheath protein (569 aa).

Residues 1-32 (MAVEQFPRKKVSRPHTEITVDTSGIGGSSSSS) are disordered.

The protein localises to the virion. The polypeptide is Putative tail sheath protein (Enterococcus phage phiEF24C (Enterococcus bacteriophage phi-EF24C)).